The sequence spans 317 residues: Tyrosine--tRNA ligase (317 aa).

Tyr33 is an L-tyrosine binding site. The 'HIGH' region motif lies at 38-46 (PSGKIHMGH). The L-tyrosine site is built by Tyr155, Gln159, Asp162, and Gln177. The short motif at 211-215 (KMASS) is the 'KMSKS' region element. Ser214 is an ATP binding site.

It belongs to the class-I aminoacyl-tRNA synthetase family. TyrS type 3 subfamily. Homodimer.

The protein resides in the cytoplasm. The enzyme catalyses tRNA(Tyr) + L-tyrosine + ATP = L-tyrosyl-tRNA(Tyr) + AMP + diphosphate + H(+). In terms of biological role, catalyzes the attachment of tyrosine to tRNA(Tyr) in a two-step reaction: tyrosine is first activated by ATP to form Tyr-AMP and then transferred to the acceptor end of tRNA(Tyr). The polypeptide is Tyrosine--tRNA ligase (Methanosarcina acetivorans (strain ATCC 35395 / DSM 2834 / JCM 12185 / C2A)).